We begin with the raw amino-acid sequence, 256 residues long: tRNA-cytidine(32) 2-sulfurtransferase (256 aa).

Positions 35 to 40 (SGGKDS) match the PP-loop motif motif. Residues cysteine 110, cysteine 113, and cysteine 201 each coordinate [4Fe-4S] cluster.

It belongs to the TtcA family. As to quaternary structure, homodimer. Mg(2+) is required as a cofactor. Requires [4Fe-4S] cluster as cofactor.

It is found in the cytoplasm. The catalysed reaction is cytidine(32) in tRNA + S-sulfanyl-L-cysteinyl-[cysteine desulfurase] + AH2 + ATP = 2-thiocytidine(32) in tRNA + L-cysteinyl-[cysteine desulfurase] + A + AMP + diphosphate + H(+). Its pathway is tRNA modification. Catalyzes the ATP-dependent 2-thiolation of cytidine in position 32 of tRNA, to form 2-thiocytidine (s(2)C32). The sulfur atoms are provided by the cysteine/cysteine desulfurase (IscS) system. This Coxiella burnetii (strain Dugway 5J108-111) protein is tRNA-cytidine(32) 2-sulfurtransferase.